Here is a 496-residue protein sequence, read N- to C-terminus: Cyclin-dependent kinase 16 (496 aa).

Positions Met-1 to Ser-95 are disordered. Ser-12 is modified (phosphoserine; by BRSK2). 7 positions are modified to phosphoserine: Ser-36, Ser-42, Ser-64, Ser-65, Ser-78, Ser-82, and Ser-89. Over residues Ile-69–Ser-78 the composition is skewed to basic and acidic residues. Positions Asp-83–Val-93 are enriched in polar residues. At Ser-95 the chain carries Phosphoserine; by CDK5. 6 positions are modified to phosphoserine: Ser-110, Ser-119, Ser-138, Ser-146, Ser-153, and Ser-155. The Protein kinase domain occupies Tyr-165–Phe-446. ATP-binding positions include Leu-171–Val-179 and Lys-194. Thr-175 bears the Phosphothreonine mark. Asp-286 (proton acceptor) is an active-site residue. A Phosphothreonine modification is found at Thr-380. 3 positions are modified to phosphoserine: Ser-391, Ser-478, and Ser-480.

The protein belongs to the protein kinase superfamily. CMGC Ser/Thr protein kinase family. CDC2/CDKX subfamily. Found in a complex containing CABLES1, CDK17 and TDRD7. Interacts with BRSK2. Identified in a complex with NSF, syntaxin-1, synaptotagmin, SYN1, SYP and CDK5R1. Interacts with YWHAH, YWHAQ and YWHAZ. Interacts with CCNY; this interaction increases the CDK16 kinase activity. Interacts with CCNYL1; this interaction mutually increases the stability of CDK16 and CCNYL1 and increases the kinase activity of CDK16. Interacts with NSF. In terms of processing, phosphorylation of CDK16 is essential for the binding of CCNY, but also essential for the regulation of CDK16 kinase activity. Phosphorylation of CDK16 is essential for the binding of CCNYl1, but also essential for the regulation of CDK16 kinase activity. Ser-146 and Ser-153 are the critical sites for the binding of CCNYL1 and for modulating CDK16 kinase activity. Phosphorylation at Ser-153 inhibits kinase activity. Highly expressed in testis and brain, and detected at lower levels in heart, skeletal muscle, adipose tissue, lung, spleen and pancreas (at protein level). Ubiquitous with highest levels in testis and brain, with longer form predominant in all tissues except the testis.

The protein localises to the cytoplasm. It localises to the cytoplasmic vesicle. The protein resides in the secretory vesicle. It is found in the cell membrane. Its subcellular location is the synapse. The protein localises to the synaptosome. It catalyses the reaction L-seryl-[protein] + ATP = O-phospho-L-seryl-[protein] + ADP + H(+). The catalysed reaction is L-threonyl-[protein] + ATP = O-phospho-L-threonyl-[protein] + ADP + H(+). Functionally, protein kinase that plays a role in vesicle-mediated transport processes and exocytosis. Can phosphorylate CCNY at 'Ser-336' (in vitro). Plays a role in the regulation of insulin secretion in response to changes in blood glucose levels. Regulates GH1 release by brain neurons. Phosphorylates NSF, and thereby regulates NSF oligomerization. Required for normal spermatogenesis. Regulates neuron differentiation and dendrite development. This chain is Cyclin-dependent kinase 16 (Cdk16), found in Mus musculus (Mouse).